A 483-amino-acid polypeptide reads, in one-letter code: Betaine aldehyde dehydrogenase (483 aa).

K(+)-binding residues include I27 and D93. NAD(+) is bound at residue 149–151 (GAW). K161 functions as the Charge relay system in the catalytic mechanism. 175 to 178 (KPSE) is an NAD(+) binding site. Residue V179 coordinates K(+). 228–231 (SVPT) contributes to the NAD(+) binding site. V243 contacts K(+). The Proton acceptor role is filled by E249. Residues G251, C283, and E380 each coordinate NAD(+). C283 serves as the catalytic Nucleophile. Cysteine sulfenic acid (-SOH) is present on C283. K(+)-binding residues include K450 and G453. E457 serves as the catalytic Charge relay system.

The protein belongs to the aldehyde dehydrogenase family. As to quaternary structure, dimer of dimers. It depends on K(+) as a cofactor.

It carries out the reaction betaine aldehyde + NAD(+) + H2O = glycine betaine + NADH + 2 H(+). It participates in amine and polyamine biosynthesis; betaine biosynthesis via choline pathway; betaine from betaine aldehyde: step 1/1. Functionally, involved in the biosynthesis of the osmoprotectant glycine betaine. Catalyzes the irreversible oxidation of betaine aldehyde to the corresponding acid. The protein is Betaine aldehyde dehydrogenase of Cereibacter sphaeroides (strain ATCC 17029 / ATH 2.4.9) (Rhodobacter sphaeroides).